The following is a 295-amino-acid chain: Tyrosine recombinase XerD (295 aa).

Positions 1-85 (MNTIIEEYLN…TIRSFHQFAL (85 aa)) constitute a Core-binding (CB) domain. Positions 106–289 (KLPDVLEIDE…SKSQIRKMYT (184 aa)) constitute a Tyr recombinase domain. Catalysis depends on residues R146, K170, H241, R244, and H267. Y276 acts as the O-(3'-phospho-DNA)-tyrosine intermediate in catalysis.

This sequence belongs to the 'phage' integrase family. XerD subfamily. As to quaternary structure, forms a cyclic heterotetrameric complex composed of two molecules of XerC and two molecules of XerD.

It is found in the cytoplasm. Functionally, site-specific tyrosine recombinase, which acts by catalyzing the cutting and rejoining of the recombining DNA molecules. The XerC-XerD complex is essential to convert dimers of the bacterial chromosome into monomers to permit their segregation at cell division. It also contributes to the segregational stability of plasmids. This chain is Tyrosine recombinase XerD, found in Staphylococcus epidermidis (strain ATCC 35984 / DSM 28319 / BCRC 17069 / CCUG 31568 / BM 3577 / RP62A).